The following is a 155-amino-acid chain: Transcriptional regulator MraZ (155 aa).

2 SpoVT-AbrB domains span residues 5-52 and 81-124; these read TYEN…SQDR and SMNL…EPAA.

Belongs to the MraZ family. Forms oligomers.

It is found in the cytoplasm. The protein resides in the nucleoid. In Pelagibacter ubique (strain HTCC1062), this protein is Transcriptional regulator MraZ.